The sequence spans 1058 residues: Carbamoyl phosphate synthase large chain (1058 aa).

Positions 1-401 (MPKRTDIQKI…SLLKACRSLE (401 aa)) are carboxyphosphate synthetic domain. The ATP site is built by Arg-129, Arg-169, Gly-175, Gly-176, Arg-208, Ile-210, Glu-215, Gly-241, Ile-242, His-243, Gln-284, and Glu-298. Positions 133-327 (KQLMEELEQP…IAKLAAKIAV (195 aa)) constitute an ATP-grasp 1 domain. Mg(2+) contacts are provided by Gln-284, Glu-298, and Asn-300. Gln-284, Glu-298, and Asn-300 together coordinate Mn(2+). The segment at 402–546 (IGVHHNEIPE…YSTYGWENES (145 aa)) is oligomerization domain. The segment at 547–929 (IKSDKESVLV…ALYKAFEASY (383 aa)) is carbamoyl phosphate synthetic domain. The region spanning 671–861 (EQALKELDIP…MAQVATKLIL (191 aa)) is the ATP-grasp 2 domain. Residues Arg-707, Ser-746, Ile-748, Glu-752, Gly-777, Val-778, His-779, Ser-780, Gln-820, and Glu-832 each coordinate ATP. Positions 820, 832, and 834 each coordinate Mg(2+). Mn(2+)-binding residues include Gln-820, Glu-832, and Asn-834. The MGS-like domain maps to 930–1058 (LHLPTFGNVV…ESRSFVTEAI (129 aa)). An allosteric domain region spans residues 930–1058 (LHLPTFGNVV…ESRSFVTEAI (129 aa)).

The protein belongs to the CarB family. Composed of two chains; the small (or glutamine) chain promotes the hydrolysis of glutamine to ammonia, which is used by the large (or ammonia) chain to synthesize carbamoyl phosphate. Tetramer of heterodimers (alpha,beta)4. It depends on Mg(2+) as a cofactor. Requires Mn(2+) as cofactor.

The enzyme catalyses hydrogencarbonate + L-glutamine + 2 ATP + H2O = carbamoyl phosphate + L-glutamate + 2 ADP + phosphate + 2 H(+). The catalysed reaction is hydrogencarbonate + NH4(+) + 2 ATP = carbamoyl phosphate + 2 ADP + phosphate + 2 H(+). Its pathway is amino-acid biosynthesis; L-arginine biosynthesis; carbamoyl phosphate from bicarbonate: step 1/1. It functions in the pathway pyrimidine metabolism; UMP biosynthesis via de novo pathway; (S)-dihydroorotate from bicarbonate: step 1/3. In terms of biological role, large subunit of the glutamine-dependent carbamoyl phosphate synthetase (CPSase). CPSase catalyzes the formation of carbamoyl phosphate from the ammonia moiety of glutamine, carbonate, and phosphate donated by ATP, constituting the first step of 2 biosynthetic pathways, one leading to arginine and/or urea and the other to pyrimidine nucleotides. The large subunit (synthetase) binds the substrates ammonia (free or transferred from glutamine from the small subunit), hydrogencarbonate and ATP and carries out an ATP-coupled ligase reaction, activating hydrogencarbonate by forming carboxy phosphate which reacts with ammonia to form carbamoyl phosphate. The chain is Carbamoyl phosphate synthase large chain from Streptococcus pneumoniae (strain ATCC 700669 / Spain 23F-1).